A 397-amino-acid polypeptide reads, in one-letter code: Growth-regulating factor 5 (397 aa).

In terms of domain architecture, QLQ spans 16 to 51; that stretch reads PFTPTQWEELEHQALIYKYMVSGVPVPPELIFSIRR. Short sequence motifs (bipartite nuclear localization signal) lie at residues 78 to 96 and 114 to 121; these read RKPDPEPGRCRRTDGKKWR and RGRNRARK. The 45-residue stretch at 81-125 folds into the WRC domain; the sequence is DPEPGRCRRTDGKKWRCSREAYPDSKYCEKHMHRGRNRARKSLDQ. Disordered stretches follow at residues 108-172, 197-217, 288-320, and 340-397; these read CEKH…SMDA, LDYPYPSTSPKQQQQTLHHAS, PYHHCSTDHNKIDHHHTYSSSSSSQHLHHDHDH, and VLAN…DTGS. Residues 111-120 show a composition bias toward basic residues; sequence HMHRGRNRAR. Residues 128 to 172 are compositionally biased toward low complexity; it reads TTTTPLTSPSLSFTNNNNPSPTLSSSSSSNSSSTTYSASSSSMDA. Positions 288 to 298 are enriched in basic and acidic residues; the sequence is PYHHCSTDHNK.

Belongs to the GRF family. In terms of assembly, interacts with GIF1. Strongly expressed in actively growing and developing tissues, such as roots, upper stems, and shoot tips containing the shoot apical meristem (SAM) and flower buds. Also expressed in mature flowers, but weakly expressed in mature stems and leaves.

The protein localises to the nucleus. In terms of biological role, transcription activator that plays a role in the regulation of cell expansion in leaf and cotyledons tissues. Acts together with GIF1 for the development of appropriate leaf size and shape through the promotion and/or maintenance of cell proliferation activity in leaf primordia. The polypeptide is Growth-regulating factor 5 (GRF5) (Arabidopsis thaliana (Mouse-ear cress)).